We begin with the raw amino-acid sequence, 320 residues long: L-lactate dehydrogenase 2 (320 aa).

NAD(+) contacts are provided by valine 16, aspartate 37, lysine 42, and tyrosine 69. Residue arginine 94 coordinates substrate. NAD(+)-binding positions include serine 107, 124 to 126 (VTN), and threonine 149. 126 to 129 (NPVD) contributes to the substrate binding site. Substrate is bound at residue 154–157 (DTAR). The beta-D-fructose 1,6-bisphosphate site is built by arginine 159 and histidine 174. Histidine 181 (proton acceptor) is an active-site residue. Threonine 235 provides a ligand contact to substrate.

It belongs to the LDH/MDH superfamily. LDH family. In terms of assembly, homotetramer.

The protein localises to the cytoplasm. The catalysed reaction is (S)-lactate + NAD(+) = pyruvate + NADH + H(+). The protein operates within fermentation; pyruvate fermentation to lactate; (S)-lactate from pyruvate: step 1/1. Its activity is regulated as follows. Allosterically activated by fructose 1,6-bisphosphate (FBP). Functionally, catalyzes the conversion of lactate to pyruvate. The chain is L-lactate dehydrogenase 2 from Clostridium acetobutylicum (strain ATCC 824 / DSM 792 / JCM 1419 / IAM 19013 / LMG 5710 / NBRC 13948 / NRRL B-527 / VKM B-1787 / 2291 / W).